Reading from the N-terminus, the 341-residue chain is MKALSKLKAEKGIWLVDAPKPEMGHNDLLIKIKKTAICGTDMHIYNWDEWSQKTIPVPMVVGHEYVGEVVDIGQEVRGFKIGDRVSGEGHITCGHCRNCRAGRTHLCRNTSGVGVNREGSFAEYLVIPAFNAFKIPDDISDDLASIFDPFGNAVHTALSFDLVGEDVLITGAGPIGIMAAAVCRHVGARHVVITDVNEYRLELARKMGATRAVNVSKENLKDVMKELGMTEGFDVGLEMSGVPSAFHAMLDTMNHGGKVAMLGIPGGEMAIDWSKVIFKGLVIKGIYGREMFETWYKMASLIQSGLDISPIITHHYKIDDFQKGFDAMGSGQSGKVILSWD.

Position 38 (Cys38) interacts with Zn(2+). Residues Thr40 and His43 each act as charge relay system in the active site. Zn(2+) contacts are provided by His63, Glu64, Cys93, Cys96, Cys99, and Cys107. NAD(+)-binding positions include Ile175, Asp195, Arg200, 262–264, and 286–287; these read LGI and IY.

The protein belongs to the zinc-containing alcohol dehydrogenase family. As to quaternary structure, homotetramer. Zn(2+) serves as cofactor.

The protein localises to the cytoplasm. The catalysed reaction is L-threonine + NAD(+) = (2S)-2-amino-3-oxobutanoate + NADH + H(+). Its pathway is amino-acid degradation; L-threonine degradation via oxydo-reductase pathway; glycine from L-threonine: step 1/2. Catalyzes the NAD(+)-dependent oxidation of L-threonine to 2-amino-3-ketobutyrate. The polypeptide is L-threonine 3-dehydrogenase (Shewanella putrefaciens (strain CN-32 / ATCC BAA-453)).